The chain runs to 344 residues: uncharacterized protein (344 aa).

Residues 323–332 (KQQEQREQGR) are compositionally biased toward basic and acidic residues. A disordered region spans residues 323–344 (KQQEQREQGRRAAYLQQRGMER).

This is an uncharacterized protein from Bacillus anthracis.